The following is a 672-amino-acid chain: Glycogen [starch] synthase (672 aa).

Lysine 56 serves as a coordination point for UDP-alpha-D-glucose. Residues 645-672 (MRDNEGKVPSAATSRRPSIHSSDGEDDE) are disordered. Residues 655–665 (AATSRRPSIHS) show a composition bias toward polar residues.

This sequence belongs to the glycosyltransferase 3 family. In terms of assembly, forms a hetero-octamer with each protomer of the gsy-1 homotetramer bound to one molecule of gyg-1. The N-terminus is involved in interprotomer contacts with gyg-1. The interaction with gyg-1 is required for glycogen production but is not required for gsy-1 intrinsic activity.

It carries out the reaction [(1-&gt;4)-alpha-D-glucosyl](n) + UDP-alpha-D-glucose = [(1-&gt;4)-alpha-D-glucosyl](n+1) + UDP + H(+). It participates in glycan biosynthesis; glycogen biosynthesis. Functionally, transfers the glycosyl residue from UDP-Glc to the non-reducing end of alpha-1,4-glucan. The chain is Glycogen [starch] synthase from Caenorhabditis elegans.